The primary structure comprises 149 residues: Putative pre-16S rRNA nuclease (149 aa).

Belongs to the YqgF nuclease family.

The protein resides in the cytoplasm. Functionally, could be a nuclease involved in processing of the 5'-end of pre-16S rRNA. This Burkholderia lata (strain ATCC 17760 / DSM 23089 / LMG 22485 / NCIMB 9086 / R18194 / 383) protein is Putative pre-16S rRNA nuclease.